The following is a 214-amino-acid chain: Large ribosomal subunit protein bL25 (214 aa).

The disordered stretch occupies residues 179–214; it reads VPPTQGPSEAEIEEVEAGDADTPEPEVVGEKEEDEE. The segment covering 188–202 has biased composition (acidic residues); sequence AEIEEVEAGDADTPE.

It belongs to the bacterial ribosomal protein bL25 family. CTC subfamily. In terms of assembly, part of the 50S ribosomal subunit; part of the 5S rRNA/L5/L18/L25 subcomplex. Contacts the 5S rRNA. Binds to the 5S rRNA independently of L5 and L18.

Its function is as follows. This is one of the proteins that binds to the 5S RNA in the ribosome where it forms part of the central protuberance. This Staphylococcus carnosus (strain TM300) protein is Large ribosomal subunit protein bL25.